We begin with the raw amino-acid sequence, 288 residues long: Polyamine aminopropyltransferase (288 aa).

Residues 9 to 238 form the PABS domain; the sequence is ETLHDQFGQY…GIMTFAWATD (230 aa). Q33 serves as a coordination point for S-methyl-5'-thioadenosine. H64 and D88 together coordinate spermidine. S-methyl-5'-thioadenosine is bound by residues E108 and 140-141; that span reads DG. The Proton acceptor role is filled by D158. 158-161 contributes to the spermidine binding site; it reads DCTD. Residue P165 coordinates S-methyl-5'-thioadenosine.

It belongs to the spermidine/spermine synthase family. In terms of assembly, homodimer or homotetramer.

It localises to the cytoplasm. It catalyses the reaction S-adenosyl 3-(methylsulfanyl)propylamine + putrescine = S-methyl-5'-thioadenosine + spermidine + H(+). It participates in amine and polyamine biosynthesis; spermidine biosynthesis; spermidine from putrescine: step 1/1. Catalyzes the irreversible transfer of a propylamine group from the amino donor S-adenosylmethioninamine (decarboxy-AdoMet) to putrescine (1,4-diaminobutane) to yield spermidine. The polypeptide is Polyamine aminopropyltransferase (Escherichia fergusonii (strain ATCC 35469 / DSM 13698 / CCUG 18766 / IAM 14443 / JCM 21226 / LMG 7866 / NBRC 102419 / NCTC 12128 / CDC 0568-73)).